The chain runs to 166 residues: Small ribosomal subunit protein uS5 (166 aa).

Residues 11-74 (LIDKVVHISR…ESAKRTMFEV (64 aa)) enclose the S5 DRBM domain.

The protein belongs to the universal ribosomal protein uS5 family. Part of the 30S ribosomal subunit. Contacts proteins S4 and S8.

In terms of biological role, with S4 and S12 plays an important role in translational accuracy. Located at the back of the 30S subunit body where it stabilizes the conformation of the head with respect to the body. The sequence is that of Small ribosomal subunit protein uS5 from Syntrophobacter fumaroxidans (strain DSM 10017 / MPOB).